Consider the following 34-residue polypeptide: MSDIN-like toxin proprotein 2 (34 aa).

A propeptide spanning residues 1-10 (MSDINTARLP) is cleaved from the precursor. The segment at residues 11 to 20 (FYQFPDFKYP) is a cross-link (cyclopeptide (Phe-Pro)). Positions 21 to 34 (CVGDDIEMVLARGE) are excised as a propeptide.

It belongs to the MSDIN fungal toxin family. Processed by the macrocyclase-peptidase enzyme POPB to yield a toxic cyclic decapeptide. POPB first removes 10 residues from the N-terminus. Conformational trapping of the remaining peptide forces the enzyme to release this intermediate rather than proceed to macrocyclization. The enzyme rebinds the remaining peptide in a different conformation and catalyzes macrocyclization of the N-terminal 10 residues.

Its function is as follows. Probable toxin that belongs to the MSDIN-like toxin family responsible for a large number of food poisoning cases and deaths. The polypeptide is MSDIN-like toxin proprotein 2 (Amanita bisporigera (Destroying angel)).